The sequence spans 278 residues: Bifunctional protein FolD (278 aa).

Residues 163-165 (GRS), Ser-188, and Val-229 each bind NADP(+).

The protein belongs to the tetrahydrofolate dehydrogenase/cyclohydrolase family. As to quaternary structure, homodimer.

It carries out the reaction (6R)-5,10-methylene-5,6,7,8-tetrahydrofolate + NADP(+) = (6R)-5,10-methenyltetrahydrofolate + NADPH. It catalyses the reaction (6R)-5,10-methenyltetrahydrofolate + H2O = (6R)-10-formyltetrahydrofolate + H(+). It participates in one-carbon metabolism; tetrahydrofolate interconversion. Its function is as follows. Catalyzes the oxidation of 5,10-methylenetetrahydrofolate to 5,10-methenyltetrahydrofolate and then the hydrolysis of 5,10-methenyltetrahydrofolate to 10-formyltetrahydrofolate. In Exiguobacterium sp. (strain ATCC BAA-1283 / AT1b), this protein is Bifunctional protein FolD.